We begin with the raw amino-acid sequence, 321 residues long: Probable arabinan endo-1,5-alpha-L-arabinosidase A (321 aa).

An N-terminal signal peptide occupies residues 1–19 (MHPSTFVTTIACLAGLAHG). The active-site Proton acceptor is Asp-34. The active-site Proton donor is Glu-200.

This sequence belongs to the glycosyl hydrolase 43 family.

It localises to the secreted. The catalysed reaction is Endohydrolysis of (1-&gt;5)-alpha-arabinofuranosidic linkages in (1-&gt;5)-arabinans.. It participates in glycan metabolism; L-arabinan degradation. Functionally, endo-1,5-alpha-L-arabinanase involved in degradation of pectin. Its preferred substrate is linear 1,5-alpha-L-arabinan. The protein is Probable arabinan endo-1,5-alpha-L-arabinosidase A (abnA) of Aspergillus clavatus (strain ATCC 1007 / CBS 513.65 / DSM 816 / NCTC 3887 / NRRL 1 / QM 1276 / 107).